The primary structure comprises 208 residues: Protein-L-isoaspartate O-methyltransferase (208 aa).

Residue Ser59 is part of the active site.

It belongs to the methyltransferase superfamily. L-isoaspartyl/D-aspartyl protein methyltransferase family.

The protein localises to the cytoplasm. The catalysed reaction is [protein]-L-isoaspartate + S-adenosyl-L-methionine = [protein]-L-isoaspartate alpha-methyl ester + S-adenosyl-L-homocysteine. Its function is as follows. Catalyzes the methyl esterification of L-isoaspartyl residues in peptides and proteins that result from spontaneous decomposition of normal L-aspartyl and L-asparaginyl residues. It plays a role in the repair and/or degradation of damaged proteins. This Salmonella arizonae (strain ATCC BAA-731 / CDC346-86 / RSK2980) protein is Protein-L-isoaspartate O-methyltransferase.